The sequence spans 214 residues: U3 small nucleolar RNA-associated protein 16 (214 aa).

A compositionally biased stretch (basic and acidic residues) spans Met1–Ala10. The segment at Met1–Asp106 is disordered. The residue at position 16 (Ser16) is a Phosphoserine. Basic and acidic residues predominate over residues Asp22–Ser41. The span at Asp42 to Gln52 shows a compositional bias: acidic residues. A phosphoserine mark is found at Ser45, Ser65, and Ser144. A compositionally biased stretch (basic and acidic residues) spans Glu54–Arg75. The interval Ser182–Gly214 is disordered. Residues Pro192–Leu206 are compositionally biased toward basic and acidic residues.

This sequence belongs to the UTP16 family. As to quaternary structure, part of the small subunit (SSU) processome composed of at least 40 protein subunits and the RNA chaperone small nucleolar RNA (snoRNA) U3. Interacts with snoRNA U3. Interacts with MPP10.

It localises to the nucleus. Its subcellular location is the nucleolus. In terms of biological role, functions as part of the small subunit (SSU) processome, first precursor of the small eukaryotic ribosomal subunit that coordinates the first two steps of ribosome biogenesis in transcription of the primary transcript pre-RNA and pre-18S processing. During the assembly of the SSU processome in the nucleolus, many ribosome biogenesis factors, an RNA chaperone and ribosomal proteins associate with the nascent pre-rRNA and work in concert to generate RNA folding, modifications, rearrangements and cleavage as well as targeted degradation of pre-ribosomal RNA by the RNA exosome. Has a role in bud site selection maybe via the regulation of expression of bipolar budding components. The polypeptide is U3 small nucleolar RNA-associated protein 16 (BUD21) (Saccharomyces cerevisiae (strain ATCC 204508 / S288c) (Baker's yeast)).